A 150-amino-acid chain; its full sequence is Calmodulin-like protein 7 (150 aa).

EF-hand domains are found at residues 1 to 36, 37 to 72, 75 to 110, and 113 to 148; these read MDPT…LGIY, IPDK…IMDE, EEEE…LGLK, and KTLD…GGFN. Ca(2+) contacts are provided by Asp-14, Asn-16, Asp-18, Thr-20, Glu-25, Asp-50, Asn-52, Asp-54, Cys-56, Glu-61, Asp-88, Asn-90, Asp-92, Glu-99, Asp-126, Asp-128, Asp-130, Arg-132, and Glu-137.

Belongs to the calmodulin family.

Potential calcium sensor. This is Calmodulin-like protein 7 (CML7) from Arabidopsis thaliana (Mouse-ear cress).